The chain runs to 486 residues: Nucleolar protein 56 (486 aa).

A Nop domain is found at Cys298–Ser416. The tract at residues Lys450 to Glu486 is disordered. Basic residues predominate over residues Pro475–Glu486.

It belongs to the NOP5/NOP56 family.

The protein resides in the nucleus. It localises to the nucleolus. Its function is as follows. Required for 60S ribosomal subunit synthesis. The polypeptide is Nucleolar protein 56 (Caenorhabditis elegans).